The following is a 228-amino-acid chain: Small ribosomal subunit protein uS3 (228 aa).

A KH type-2 domain is found at 39 to 107 (TREYLQDKLK…PVHINIEEIR (69 aa)).

Belongs to the universal ribosomal protein uS3 family. Part of the 30S ribosomal subunit. Forms a tight complex with proteins S10 and S14.

Binds the lower part of the 30S subunit head. Binds mRNA in the 70S ribosome, positioning it for translation. In Pseudomonas entomophila (strain L48), this protein is Small ribosomal subunit protein uS3.